The primary structure comprises 998 residues: tRNA (34-2'-O)-methyltransferase regulator WDR6 (998 aa).

11 WD repeats span residues 148 to 185 (LYYT…ESDP), 200 to 239 (AHNG…DWTT), 250 to 291 (GHSS…ILKR), 294 to 333 (QFGA…NRPK), 476 to 515 (NNRE…DDFQ), 527 to 566 (MGSN…STLR), 567 to 608 (VSQR…LLQL), 664 to 704 (RNCN…LSQR), 779 to 821 (ARLM…QLDL), 826 to 865 (DIQR…TYFQ), and 868 to 911 (LHVT…VEQK).

The protein belongs to the WD repeat WDR6 family. Interacts with Trm7-34.

It localises to the cytoplasm. In terms of biological role, together with methyltransferase Trm7-34, methylates the 2'-O-ribose of nucleotides at position 34 of the anticodon loop of substrate tRNAs. This Drosophila melanogaster (Fruit fly) protein is tRNA (34-2'-O)-methyltransferase regulator WDR6.